A 439-amino-acid polypeptide reads, in one-letter code: Prenyltransferase iacE (439 aa).

Residues 88 to 89, glutamate 97, arginine 112, lysine 198, tyrosine 200, arginine 271, lysine 273, and tyrosine 275 each bind substrate; that span reads WI.

The protein belongs to the tryptophan dimethylallyltransferase family.

It catalyses the reaction siccayne + dimethylallyl diphosphate = pestalodiol + diphosphate. It functions in the pathway secondary metabolite biosynthesis. Its function is as follows. Prenyltransferase; part of the gene cluster that mediates the biosynthesis of iso-A82775C, a enylepoxycyclohexane and biosynthetic precursor of the chloropestolide anticancer natural products. Within the cluster, the prenyltransferase iacE prenylates siccayne to generate pestalodiol E, using dimethylallyl diphosphate (DMAPP) as cosubstrate. The probable oxidoreductase iacF is then involved in the epoxidation of pestalodiol F to pestalodiol F, which is further converted to pestalofone A by the short-chain dehydrogenase/reductase iacG. Iso-A82775C is subsequently generated from pestalofone A by the short-chain dehydrogenase/reductase iacC. Iso-A82775C is further condensed with maldoxin via a Diels-Alder reaction to produce the anticancer natural products chloropestolides A to E. The sequence is that of Prenyltransferase iacE from Pestalotiopsis fici (strain W106-1 / CGMCC3.15140).